We begin with the raw amino-acid sequence, 258 residues long: Archaerhodopsin-3 (258 aa).

Residues 1–6 (MDPIAL) constitute a propeptide that is removed on maturation. Position 7 is a pyrrolidone carboxylic acid (glutamine 7). Residues 7–18 (QAGYDLLGDGRP) lie on the Extracellular side of the membrane. The helical transmembrane segment at 19–40 (ETLWLGIGTLLMLIGTFYFLVR) threads the bilayer. The Cytoplasmic segment spans residues 41 to 49 (GWGVTDKDA). A helical transmembrane segment spans residues 50–71 (REYYAVTILVPGIASAAYLSMF). The Extracellular portion of the chain corresponds to 72–89 (FGIGLTEVTVGGEMLDIY). The helical transmembrane segment at 90-111 (YARYADWLFTTPLLLLDLALLA) threads the bilayer. The Cytoplasmic segment spans residues 112–114 (KVD). Residues 115-137 (RVTIGTLVGVDALMIVTGLIGAL) traverse the membrane as a helical segment. The Extracellular portion of the chain corresponds to 138-141 (SHTA). A helical transmembrane segment spans residues 142 to 170 (IARYSWWLFSTICMIVVLYFLATSLRSAA). The Cytoplasmic segment spans residues 171-173 (KER). The helical transmembrane segment at 174-202 (GPEVASTFNTLTALVLVLWTAYPILWIIG) threads the bilayer. Residues 203-210 (TEGAGVVG) lie on the Extracellular side of the membrane. A helical transmembrane segment spans residues 211-243 (LGIETLLFMVLDVTAKVGFGFILLRSRAILGDT). Residue lysine 226 is modified to N6-(retinylidene)lysine. Over 244-258 (EAPEPSAGADVSAAD) the chain is Cytoplasmic.

Belongs to the archaeal/bacterial/fungal opsin family.

The protein resides in the cell membrane. Functionally, light-driven proton pump. The chain is Archaerhodopsin-3 (aop3) from Halorubrum sodomense.